Reading from the N-terminus, the 222-residue chain is Glutathione S-transferase A4 (222 aa).

Met-1 carries the post-translational modification N-acetylmethionine. The 81-residue stretch at 3–83 (TKPKLHYPNG…YIADKHHLFG (81 aa)) folds into the GST N-terminal domain. Residues Tyr-9, 54 to 55 (QV), and 67 to 68 (QT) contribute to the glutathione site. The 124-residue stretch at 85 to 208 (DLKERTLIDM…EPGSKKKPPP (124 aa)) folds into the GST C-terminal domain.

This sequence belongs to the GST superfamily. Alpha family. As to quaternary structure, homodimer.

It localises to the cytoplasm. The catalysed reaction is RX + glutathione = an S-substituted glutathione + a halide anion + H(+). Conjugation of reduced glutathione to a wide number of exogenous and endogenous hydrophobic electrophiles. The protein is Glutathione S-transferase A4 (GSTA4) of Bos taurus (Bovine).